The chain runs to 208 residues: Small ribosomal subunit protein uS4 (208 aa).

The 63-residue stretch at 98 to 160 folds into the S4 RNA-binding domain; sequence RRIDNTVYRL…SRQLQMINEA (63 aa).

Belongs to the universal ribosomal protein uS4 family. Part of the 30S ribosomal subunit. Contacts protein S5. The interaction surface between S4 and S5 is involved in control of translational fidelity.

Its function is as follows. One of the primary rRNA binding proteins, it binds directly to 16S rRNA where it nucleates assembly of the body of the 30S subunit. In terms of biological role, with S5 and S12 plays an important role in translational accuracy. The chain is Small ribosomal subunit protein uS4 from Syntrophobacter fumaroxidans (strain DSM 10017 / MPOB).